A 1266-amino-acid polypeptide reads, in one-letter code: MIAHKQKKAKKKRVWASGQPSAAITTSEMGLKSVSSSSSFDPEYIKELVNDVRKFSHMLLYLKEAILSDCFKEVIHIRLDELLRVLKSILSKHQNLSSVDLQSAAEVLTAKVKAVNFTEVNEENKNDIFREVFSSIETLAFTFGNILTNFLMGDVGSDSILRLPISRESKSFENISVDSVDLPHEKGNFSPIELDNLLLKNTDSIELALSYAKTWSKYTKNIVSWVEKKLNLELESTRNIVKLAEATRSSIGIQEFMPLQSLFTNALLSDIHSSHLLQQTIAALQANKFVQPLLGRKNEMEKQRKEIKDLWKQQQNKLLETETALKKAKLLCMQRQDEYEKAKSSMFRAEEEQLSSSVGLAKNLNKQLEKRRRLEEEALQKVEEANEHYKVCVTNVEERRNDLENTKREILTQLRTLVFQCDLTLKAVTVNLFHMQQLQAASLANSLQSLCDSAKLYDPGQEYSEFVKATSSSELEEKVDGNVNKQMTNSPQTSGYEPADSLEDVARLPDSCHKLEEDRCSNSADMTGPSFVRSWKFGMFSDSESTGGSSESRSLDSESISPGDFHRKLPRTPSSGTMSSADDLDEREPPSPSEAGPNSLGAFKKTLMSKAALTHKFRKLRSPTKCRDCDGIVMFPGVECEECLLVCHRKCLENLVIICGHQKLQGKMHIFGAEFIQVAKKEPDGIPFVLKICASEIENRALCLQGIYRVCGNKIKTEKLCQALENGMHLVDISEFSSHDICDVLKLYLRQLPEPFILFRLYKEFIDLAKEIQHVNEEQEAKKDSPEDKKHPHVSIEVNRILLKSKDLLRQLPASHFNSLHYLIAHLRRVVDHAEENKMNSKNLGVIFGPTLIRPRPTTAPVTISSLAEYSNQARLVEFLITYSQKIFDGSLQPQAVVISNTGAVAPQVDQGYLPKPLLSPDERDTDHSMKPLFFSSKEDIRSSDCESKSFELTTSFEESERRQNALGKCDAPLLDNKVHLLFDQEHESASQKMEDVCKSPKLLLLKSNRAANSVQRHTPRTKMRPVSLPVDRLLLLASSPTERSSRDVGNVDSDKFGKNPAFEGLHRKDNSNTTRSKVNGFDQQNVQKSWDTQYVRNNFTAKTTMIVPSAYPEKGLTVNTGNNRDHPGSKAHAEPARAAGDVSERRSSDSCPATAVRAPRTLQPQHWTTFYKPPNPTFSVRGTEEKTALPSIAVPPVLVHAPQIHVTKSDPDSEATLACPVQTSGQPKESSEEPALPEGTPTCQRPRLKRMQQFEDLEDEIPQFV.

A phosphoserine mark is found at serine 171, serine 176, serine 179, and serine 190. The F-BAR domain maps to 192–462 (IELDNLLLKN…SAKLYDPGQE (271 aa)). Residues 296 to 418 (RKNEMEKQRK…EILTQLRTLV (123 aa)) adopt a coiled-coil conformation. The interval 482–501 (NVNKQMTNSPQTSGYEPADS) is disordered. The span at 483-495 (VNKQMTNSPQTSG) shows a compositional bias: polar residues. A phosphoserine mark is found at serine 501, serine 521, and serine 554. Residues 542–561 (DSESTGGSSESRSLDSESIS) show a composition bias toward low complexity. A disordered region spans residues 542 to 601 (DSESTGGSSESRSLDSESISPGDFHRKLPRTPSSGTMSSADDLDEREPPSPSEAGPNSLG). Residues 614–659 (THKFRKLRSPTKCRDCDGIVMFPGVECEECLLVCHRKCLENLVIIC) form a Phorbol-ester/DAG-type zinc finger. The region spanning 673–888 (AEFIQVAKKE…FLITYSQKIF (216 aa)) is the Rho-GAP domain. Serine 920, serine 956, and serine 1028 each carry phosphoserine. Disordered regions lie at residues 1039-1081 (SSPT…KVNG), 1116-1157 (GLTV…ATAV), and 1209-1266 (KSDP…PQFV). Polar residues predominate over residues 1072 to 1081 (SNTTRSKVNG). Over residues 1124 to 1136 (NRDHPGSKAHAEP) the composition is skewed to basic and acidic residues. Serine 1149 and serine 1151 each carry phosphoserine. A compositionally biased stretch (acidic residues) spans 1256 to 1266 (EDLEDEIPQFV). An interaction with PTPN13/PTPL1 region spans residues 1263–1266 (PQFV).

In terms of assembly, interacts with PTPN13/PTPL1. Interacts with RAP2A via its coiled coil domain. Interacts with RASIP1.

Functionally, GTPase activator for the Rho-type GTPases by converting them to an inactive GDP-bound state. Has strong activity toward RHOA, and weaker activity toward RAC1 and CDC42. May act as a specific effector of RAP2A to regulate Rho. In concert with RASIP1, suppresses RhoA signaling and dampens ROCK and MYH9 activities in endothelial cells and plays an essential role in blood vessel tubulogenesis. This Mus musculus (Mouse) protein is Rho GTPase-activating protein 29 (Arhgap29).